A 295-amino-acid chain; its full sequence is Protein SSO2 (295 aa).

Topologically, residues 1–269 are cytoplasmic; it reads MSNANPYENN…ARKARKNKIR (269 aa). Phosphoserine occurs at positions 31 and 34. Positions 39–100 form a coiled coil; the sequence is AFMNKINSIN…ATDLQYQLKA (62 aa). Residues 194-256 enclose the t-SNARE coiled-coil homology domain; that stretch reads LAEVQARHQE…EQGVGHTNKA (63 aa). Residues 270-291 form a helical; Anchor for type IV membrane protein membrane-spanning segment; the sequence is CLIICFIIFAIVVVVVVVPSVV. Topologically, residues 292–295 are extracellular; that stretch reads ETRK.

Belongs to the syntaxin family.

Its subcellular location is the membrane. Required for vesicle fusion with the plasma membrane. This chain is Protein SSO2 (SSO2), found in Saccharomyces cerevisiae (strain ATCC 204508 / S288c) (Baker's yeast).